A 297-amino-acid chain; its full sequence is E3 ubiquitin-protein ligase TRIM52 (297 aa).

Residues 20 to 62 (CAICLDYFKDPVSISCGHNFCRGCVTQLWSKEDEEDQNEEEDE) form an RING-type; degenerate zinc finger. The segment at 72-167 (VGAMDGWDGS…DEDEDEELYP (96 aa)) is important for rapid proteolytic degradation by the proteasome. A B box-type zinc finger spans residues 222–263 (NDQGMCFKHQEALKLFCEVDKEAICVVCRESRSHKQHSVLPL). 4 residues coordinate Zn(2+): cysteine 227, histidine 230, cysteine 249, and histidine 255.

Belongs to the TRIM/RBCC family. (Microbial infection) Interacts with Japanese encephalitis virus non-structural protein 2 (NS2A); mediates the ubiquitination of NS2A, targeting it for proteasome-mediated degradation. Post-translationally, autoubiquitinated. Polyubiquitinated. Undergoes extremely rapid proteolytic degradation by the proteasome.

Its subcellular location is the cytoplasm. It localises to the cytosol. The protein resides in the nucleus. It carries out the reaction S-ubiquitinyl-[E2 ubiquitin-conjugating enzyme]-L-cysteine + [acceptor protein]-L-lysine = [E2 ubiquitin-conjugating enzyme]-L-cysteine + N(6)-ubiquitinyl-[acceptor protein]-L-lysine.. The protein operates within protein modification; protein ubiquitination. Its function is as follows. E3 ubiquitin-protein ligase. Positively regulates the NF-kappa-B signaling pathway. Functionally, (Microbial infection) Exhibits antiviral activity against Japanese encephalitis virus (JEV). Ubiquitinates the viral non-structural protein 2 (NS2A) and targets it for proteasome-mediated degradation. This is E3 ubiquitin-protein ligase TRIM52 (TRIM52) from Homo sapiens (Human).